The chain runs to 464 residues: Gamma-aminobutyric acid receptor subunit rho-3 (464 aa).

A signal peptide spans 1 to 15 (MVLAFWLAFFTYTWI). Over 16–263 (TLMLDASAVK…LFINFVLRRH (248 aa)) the chain is Extracellular. Position 108 (Arg108) interacts with 4-aminobutanoate. A glycan (N-linked (GlcNAc...) asparagine) is linked at Asn123. A 4-aminobutanoate-binding site is contributed by Ser172. Cys181 and Cys195 are joined by a disulfide. Asn194 is a glycosylation site (N-linked (GlcNAc...) asparagine). Glu200 contacts 4-aminobutanoate. Residues 264 to 284 (IFFFVLQTYFPAMLMVMLSWV) traverse the membrane as a helical segment. Residues 285-296 (SFWIDRRAVPAR) are Cytoplasmic-facing. Residues 297 to 317 (VSLGITTVLTMSTIVTGVSAS) traverse the membrane as a helical segment. Residues 318–328 (MPQVSYVKAVD) lie on the Extracellular side of the membrane. Residues 329 to 349 (VYMWVSSLFVFLSVIEYAAVN) traverse the membrane as a helical segment. The tract at residues 344-445 (EYAAVNYLTT…NNHVIDTYSR (102 aa)) is interaction with SQSTM1. Over 350-443 (YLTTVEEWKQ…LENNHVIDTY (94 aa)) the chain is Cytoplasmic. Residues 444 to 464 (SRIVFPVVYIIFNLFYWGIYV) traverse the membrane as a helical segment.

Belongs to the ligand-gated ion channel (TC 1.A.9) family. Gamma-aminobutyric acid receptor (TC 1.A.9.5) subfamily. GABRR3 sub-subfamily. In terms of assembly, three rho subunits (rho-1/GBRR1, rho-2/GBRR2 and rho-3/GBRR3) coassemble either to form functional homopentamers or heteropentamers. Forms a ternary complex with SQSTM1 and PRKCZ. Expressed in retina.

The protein localises to the postsynaptic cell membrane. It localises to the cell membrane. The catalysed reaction is chloride(in) = chloride(out). Activated by agonists in the following the potency order: muscimol &gt; TACP &gt; TACA &gt; thiomuscimol &gt; CAMP &gt; CACA, when forming a homopentamer. Inhibited by TPMPA, a rho-specific antagonist, when forming a homopentamer. Inhibited antagonists in the following the potency order: TAMP = TPMPA &gt; P4MPA = THIP &gt; 14AA &gt; 3-APA, when forming a homopentamer. Its function is as follows. Rho subunit of the pentameric ligand-gated chloride channels responsible for mediating the effects of gamma-aminobutyric acid (GABA), the major inhibitory neurotransmitter in the brain. Rho-containing GABA-gated chloride channels are a subclass of GABA(A) receptors (GABAARs) entirely composed of rho subunits, where GABA molecules bind at the rho intersubunit interfaces. When activated by GABA, rho-GABAARs selectively allow the flow of chloride anions across the cell membrane down their electrochemical gradient. This chain is Gamma-aminobutyric acid receptor subunit rho-3, found in Rattus norvegicus (Rat).